Consider the following 263-residue polypeptide: uncharacterized protein (263 aa).

13–20 serves as a coordination point for NADP(+); it reads TGSTSGIG. Ser-141 contributes to the substrate binding site. The active-site Proton acceptor is the Tyr-154.

This sequence belongs to the short-chain dehydrogenases/reductases (SDR) family.

This is an uncharacterized protein from Bacillus subtilis (strain 168).